A 377-amino-acid chain; its full sequence is Mitogen-activated protein kinase mpkC (377 aa).

The Protein kinase domain occupies 20-299 (YVNPQPIGMG…AQDALRHPYL (280 aa)). ATP contacts are provided by residues 26 to 34 (IGMGSFGLV) and Lys49. The active-site Proton acceptor is the Asp141. Residue Thr171 is modified to Phosphothreonine. A TXY motif is present at residues 171–173 (TGY). Tyr173 is subject to Phosphotyrosine.

The protein belongs to the protein kinase superfamily. Ser/Thr protein kinase family. MAP kinase subfamily. HOG1 sub-subfamily. Mg(2+) is required as a cofactor. In terms of processing, dually phosphorylated on Thr-171 and Tyr-173, which activates the enzyme.

It carries out the reaction L-seryl-[protein] + ATP = O-phospho-L-seryl-[protein] + ADP + H(+). The catalysed reaction is L-threonyl-[protein] + ATP = O-phospho-L-threonyl-[protein] + ADP + H(+). Activated by tyrosine and threonine phosphorylation. In terms of biological role, mitogen-activated protein kinase required for growth on media where sorbitol or mannitol is the sole carbon source. This is Mitogen-activated protein kinase mpkC (mpkc) from Neosartorya fischeri (strain ATCC 1020 / DSM 3700 / CBS 544.65 / FGSC A1164 / JCM 1740 / NRRL 181 / WB 181) (Aspergillus fischerianus).